The chain runs to 334 residues: MSKNLLEQLREVTVVVADTGDIQAIEKFKPQDATTNPSLITAAAQMPEYQGIVDQTLLQAKKDAGDGATQAQIVSLAFDRLAVAFGLKILQIIPGRVSTEVDARLSYDTEATLTKARDLIAQYKAAGIGRDRVLIKIASTWEGIRAAEILEKEGIHCNLTLLFGLHQAIACAEAGVTLISPFVGRILDWYKKDTGRDSYPATEDPGVLSVTKIYNYYKKFGYKTEVMGASFRNLGEITELAGSDLLTISPSLLAELQSTVAELPRKLDPAKAASLSIEKISIDKASYDKMHAADRMATDKLDEGIKGFTKALEDLEKLLADRLVRLEGEVVASH.

Lys-136 (schiff-base intermediate with substrate) is an active-site residue.

Belongs to the transaldolase family. Type 1 subfamily. In terms of assembly, homodimer.

The protein localises to the cytoplasm. It carries out the reaction D-sedoheptulose 7-phosphate + D-glyceraldehyde 3-phosphate = D-erythrose 4-phosphate + beta-D-fructose 6-phosphate. It functions in the pathway carbohydrate degradation; pentose phosphate pathway; D-glyceraldehyde 3-phosphate and beta-D-fructose 6-phosphate from D-ribose 5-phosphate and D-xylulose 5-phosphate (non-oxidative stage): step 2/3. Transaldolase is important for the balance of metabolites in the pentose-phosphate pathway. This is Transaldolase from Nostoc punctiforme (strain ATCC 29133 / PCC 73102).